Here is a 179-residue protein sequence, read N- to C-terminus: Ribosome maturation factor RimM (179 aa).

Positions K96 to I175 constitute a PRC barrel domain.

This sequence belongs to the RimM family. As to quaternary structure, binds ribosomal protein uS19.

It localises to the cytoplasm. In terms of biological role, an accessory protein needed during the final step in the assembly of 30S ribosomal subunit, possibly for assembly of the head region. Essential for efficient processing of 16S rRNA. May be needed both before and after RbfA during the maturation of 16S rRNA. It has affinity for free ribosomal 30S subunits but not for 70S ribosomes. This is Ribosome maturation factor RimM from Sulfurimonas denitrificans (strain ATCC 33889 / DSM 1251) (Thiomicrospira denitrificans (strain ATCC 33889 / DSM 1251)).